A 333-amino-acid chain; its full sequence is MKLTIATALVGILLIACAHVANGSDCGCPKRTTPKPCTTARPTCAPVTTTTCRPPTTTRCPPPTTTRCPPPTRPAECTATTKRPTARPTTKRATTRRTTVRATTKRATTRRTTKRATTRRTTVRATTKRATTRRTTTKRAPTRRATTKRATTRRNPTRRTTTRRAPTKRATTKRATTRRNPTKRKTTRRTTVRATKTTKRATTKRAPTKRATTKRAPTKRATTKRAPTKRATTKRAPTKRATTKRAPTKRATTKRAPTKRATTKRAPTKRATTKRATARPTSKPCGCKPCGPGGEPCQGCAKRDALCQDLNNILRNLERKVRQCVCGEPQWLL.

An N-terminal signal peptide occupies residues 1 to 23 (MKLTIATALVGILLIACAHVANG). A disordered region spans residues 51–285 (TCRPPTTTRC…ATARPTSKPC (235 aa)). Residues 60–73 (CPPPTTTRCPPPTR) show a composition bias toward pro residues. The segment covering 74–88 (PAECTATTKRPTARP) has biased composition (low complexity). Residues 89 to 277 (TTKRATTRRT…TKRATTKRAT (189 aa)) show a composition bias toward basic residues.

This is Salivary glue protein Sgs-3 (Sgs3) from Drosophila erecta (Fruit fly).